The following is a 92-amino-acid chain: Small ribosomal subunit protein uS19 (92 aa).

It belongs to the universal ribosomal protein uS19 family.

Functionally, protein S19 forms a complex with S13 that binds strongly to the 16S ribosomal RNA. The protein is Small ribosomal subunit protein uS19 of Gloeothece citriformis (strain PCC 7424) (Cyanothece sp. (strain PCC 7424)).